The following is a 144-amino-acid chain: Maximins 2/H8 type 1 (144 aa).

Positions 1–18 (MNFKYIVAVSFLIASAYA) are cleaved as a signal peptide. The propeptide occupies 19–43 (RSEENEIQSLSQRDVLEEESLREMR). Position 70 is an asparagine amide (asparagine 70). Positions 74 to 123 (TAEEHEVMKRLETVMRDLDSLDYPEEASERETRGFNQEEIANLFTKKEKR) are excised as a propeptide. Isoleucine 143 is subject to Isoleucine amide.

The protein belongs to the bombinin family. As to expression, expressed by the skin glands.

The protein localises to the secreted. In terms of biological role, maximin-2 shows antibacterial activity against both Gram-positive and Gram-negative bacteria. It also shows antimicrobial activity against the fungus C.albicans, but not against A.flavus nor P.uticale. It has little hemolytic activity. Maximin-H8 shows antimicrobial activity against bacteria and against the fungus C.albicans. Shows strong hemolytic activity. This Bombina maxima (Giant fire-bellied toad) protein is Maximins 2/H8 type 1.